The chain runs to 263 residues: TLC domain-containing protein 4 (263 aa).

The next 4 helical transmembrane spans lie at 7–27 (LLISVTCISFFTFQLLFYFVS), 53–73 (VVSTCHSLVVGIFGLYIFLFD), 90–110 (VNIAIASGYLISDLSIIILYW), and 124–144 (ASLYAYYLVLKNGVLAYIGNF). The 203-residue stretch at 44–246 (KKKIEWNSRV…ISKGCIKVIS (203 aa)) folds into the TLC domain. Residue K165 is modified to N6-acetyllysine. 2 helical membrane-spanning segments follow: residues 173-193 (IVINGILMTVVFFIVRIASML) and 211-231 (LGVLIQLSWVISCVVLDVMNV).

Belongs to the TLCD4 family.

It is found in the membrane. The sequence is that of TLC domain-containing protein 4 from Homo sapiens (Human).